The primary structure comprises 708 residues: F-box only protein 43 (708 aa).

Positions M35–P55 are disordered. S76 is subject to Phosphoserine. T234 carries the post-translational modification Phosphothreonine. The segment at P320–E426 is disordered. The span at S327–N337 shows a compositional bias: polar residues. A Phosphoserine modification is found at S334. The segment covering K374–S385 has biased composition (basic residues). Basic and acidic residues predominate over residues E399–A411. Positions M490–K547 constitute an F-box domain. The ZBR-type zinc finger occupies A636–G684. Positions 640, 643, 658, 663, 668, 671, 676, and 681 each coordinate Zn(2+). Residues S682 to L708 are disordered.

Part of a SCF (SKP1-cullin-F-box) protein ligase complex. According to PubMed:34595750 interaction with SKP1 does not occur. Interacts with ANAPC2; the interaction is direct, ANAPC4, CDC16, CDC23; the interaction is direct, ANAPC10; the interaction is direct and CDC26, during spermatogenesis. May interact with CDC20. Post-translationally, phosphorylated on Ser-76, Thr-234 and Ser-334 in response to calcium, which is a prerequisite for ubiquitination and proteasomal degradation. Ubiquitinated in response to calcium, which promotes proteasomal degradation. As to expression, expressed in the testis.

It functions in the pathway protein modification; protein ubiquitination. In terms of biological role, required to establish and maintain the arrest of oocytes at the second meiotic metaphase until fertilization. Acts by inhibiting the anaphase-promoting complex/cyclosome (APC/C) ubiquitin ligase. Probably recognizes and binds to some phosphorylated proteins and promotes their ubiquitination and degradation. Plays a vital role in modulating the ubiquitilation of CCNB1 and CDK1 during gametogenesis. The chain is F-box only protein 43 (FBXO43) from Homo sapiens (Human).